Consider the following 323-residue polypeptide: Prenyl transferase (323 aa).

Residues K46, R49, and H81 each coordinate isopentenyl diphosphate. D88 and D92 together coordinate Mg(2+). R97 is a binding site for an all-trans-polyprenyl diphosphate. Residue R98 coordinates isopentenyl diphosphate. Residues K174, T175, and Q212 each contribute to the an all-trans-polyprenyl diphosphate site.

The protein belongs to the FPP/GGPP synthase family. The cofactor is Mg(2+).

The protein localises to the plastid. The protein resides in the cyanelle. Its function is as follows. Possible role in synthesis of the nonaprenyl side chain of plastoquinone or in synthesis of other prenyl chains such as undekaprenyl pyrophosphate. This chain is Prenyl transferase (preA), found in Cyanophora paradoxa.